Reading from the N-terminus, the 368-residue chain is uncharacterized protein (368 aa).

The tract at residues 237 to 287 (ESLSIPSRRRPSSIAPIGTRPSRKEIAFSNSSTPTDQTLRPPNPPAANGNA) is disordered. Residues 238–253 (SLSIPSRRRPSSIAPI) show a composition bias toward low complexity. The segment covering 264–276 (FSNSSTPTDQTLR) has biased composition (polar residues).

This is an uncharacterized protein from Schizosaccharomyces pombe (strain 972 / ATCC 24843) (Fission yeast).